The chain runs to 359 residues: WD repeat-containing protein 89 homolog (359 aa).

6 WD repeats span residues 23–62 (IGDD…ILNV), 65–104 (GHKD…CSQT), 106–144 (NQQG…RKFD), 146–186 (SHTE…DDDA), 192–232 (NAED…KIKH), and 294–333 (VHTD…TNIL).

The chain is WD repeat-containing protein 89 homolog (wdr89) from Dictyostelium discoideum (Social amoeba).